A 119-amino-acid polypeptide reads, in one-letter code: MNLAAYYPVLLFLLVGTGLGIALVSIGKILGPNKPDSEKNAPYECGFEAFEDARMKFDVRYYLVAILFIIFDLETAFLFPWGVALREIGWPGFIAMMIFLLEFLLGFAYIWKKGGLDWE.

The next 3 membrane-spanning stretches (helical) occupy residues 7-27, 63-83, and 88-108; these read YPVLLFLLVGTGLGIALVSIG, LVAILFIIFDLETAFLFPWGV, and IGWPGFIAMMIFLLEFLLGFA.

Belongs to the complex I subunit 3 family. NDH-1 is composed of 14 different subunits. Subunits NuoA, H, J, K, L, M, N constitute the membrane sector of the complex.

The protein resides in the cell inner membrane. The enzyme catalyses a quinone + NADH + 5 H(+)(in) = a quinol + NAD(+) + 4 H(+)(out). In terms of biological role, NDH-1 shuttles electrons from NADH, via FMN and iron-sulfur (Fe-S) centers, to quinones in the respiratory chain. The immediate electron acceptor for the enzyme in this species is believed to be ubiquinone. Couples the redox reaction to proton translocation (for every two electrons transferred, four hydrogen ions are translocated across the cytoplasmic membrane), and thus conserves the redox energy in a proton gradient. This is NADH-quinone oxidoreductase subunit A from Burkholderia mallei (strain NCTC 10247).